We begin with the raw amino-acid sequence, 455 residues long: O-acyltransferase pigD (455 aa).

Belongs to the trichothecene 3-O-acetyltransferase family.

The protein operates within secondary metabolite biosynthesis. Functionally, O-acetyltransferase; part of the gene cluster that mediates the biosynthesis of azaphilone pigments (MonAzPs), a complex mixture of compounds with a common azaphilone skeleton very widely used as food colorants. Within the pathway, pigD directly transfers the fatty acyl chain from the beta-ketoacyl-ACP produced by the pigJ-pigK fatty acid synthase (FAS) to the C-4 alcohol. The first step of the pathway is performed by the nrPKS pigA that forms the hexaketide precursor from successive condensations of five malonyl-CoA units, with a simple acetyl-CoA starter unit. The role of esterase pigG is not clear, but it may play at most a supplementary role in the formation of the benzaldehyde produced by the pigA nrPKS. This very reactive benzaldehyde is intercepted by the pigC ketoreductase that to provide the first stable enzyme-free MonAzPs intermediate, 6-(4-hydroxy-2-oxopentyl)-3-methyl-2,4-dioxocyclohexane carbaldehyde, also known as M7PKS-1. The FAD-dependent monooxygenase pigN hydroxylates M7PKS-1 at C-4, which triggers the formation of the pyran ring. PigJ, pigK and pigD are involved in the acetylation of the pyran ring. PigJ and pigK form the two subunits of a dedicated fungal FAS that produces the side chain fatty acyl moiety of MonAzPs and pigD transfers the fatty acyl chain to the C-4 alcohol. PigM and pigO are involved in the elimination of the omega-1 alcohol. PigM acts as an O-acetyltransferase that synthesizes the putative O-11 acetyl intermediate whereas pigO eliminates acetic acid to yield an intermediate with a C10(11) double bond. The dehydration of the C-11 alcohol followed by the reduction of the C6(7) double bond by the NAD(P)H-dependent oxidoreductase pigE increases the electrophilicity of the C-5 ketone of the resulting acyl benzopyran. This in turn sets up the C-5 ketone for an intramolecular Knoevenagel aldol condensation with the C-20 enol of the side chain. This condensation affords the characteristic linear tricyclic carbon skeletons of the yellow pigments that serve as the common precursors for the classical yellow pigments monascin and ankaflavin, orange pigments rubopunctatin and monascorubrin, and red pigments ribropunctamine and monascorubramine. The FAD-dependent oxidoreductase pigF is especially invoved in the biosynthesis of orange and red pigments via desaturation of C6(7). This is O-acyltransferase pigD from Monascus ruber (Mold).